We begin with the raw amino-acid sequence, 378 residues long: Spermidine/putrescine import ATP-binding protein PotA (378 aa).

The region spanning 18 to 248 (VQLAGIRKCF…PKNLFVAGFI (231 aa)) is the ABC transporter domain. 50-57 (GPSGCGKT) provides a ligand contact to ATP.

The protein belongs to the ABC transporter superfamily. Spermidine/putrescine importer (TC 3.A.1.11.1) family. As to quaternary structure, the complex is composed of two ATP-binding proteins (PotA), two transmembrane proteins (PotB and PotC) and a solute-binding protein (PotD).

It localises to the cell inner membrane. It catalyses the reaction ATP + H2O + polyamine-[polyamine-binding protein]Side 1 = ADP + phosphate + polyamineSide 2 + [polyamine-binding protein]Side 1.. Its function is as follows. Part of the ABC transporter complex PotABCD involved in spermidine/putrescine import. Responsible for energy coupling to the transport system. The polypeptide is Spermidine/putrescine import ATP-binding protein PotA (Escherichia coli O1:K1 / APEC).